Here is a 462-residue protein sequence, read N- to C-terminus: Sensor histidine kinase RegB (462 aa).

Residues 1–25 are Cytoplasmic-facing; sequence MILGPDGILNRDTRGDWWRLRTLIL. The helical transmembrane segment at 26 to 45 threads the bilayer; that stretch reads LRWMAVAGQLAAIVVTDWYL. The Extracellular segment spans residues 46-51; sequence GVRLPM. A helical membrane pass occupies residues 52–70; it reads GLCFMAVGASVIANVIATF. The Cytoplasmic segment spans residues 71–78; that stretch reads VFPQNRRL. A helical transmembrane segment spans residues 79–96; the sequence is TEFQALMILLFDLTQLSF. Topologically, residues 97–103 are extracellular; the sequence is LLFLTGG. The chain crosses the membrane as a helical span at residues 104–123; the sequence is LTNPFALLILAPVTISGVAL. Residues 124–129 are Cytoplasmic-facing; sequence DVRTTV. Residues 130-149 traverse the membrane as a helical segment; the sequence is ILGAIAIGLLTFTAYFHLPL. At 150-164 the chain is on the extracellular side; the sequence is ILADGSSLSVPRMFE. Residues 165-182 traverse the membrane as a helical segment; it reads FGFWLAIVIGILFLGLYS. Over 183-462 the chain is Cytoplasmic; that stretch reads RRVAIEIRSM…PLGENVLIQT (280 aa). The Histidine kinase domain maps to 218–445; the sequence is AAAHELGTPL…IVEVIWPVDR (228 aa). Position 221 is a phosphohistidine; by autocatalysis (His-221).

It is found in the cell inner membrane. It catalyses the reaction ATP + protein L-histidine = ADP + protein N-phospho-L-histidine.. Functionally, member of the two-component regulatory system RegB/RegA. Involved in the positive regulation of photosynthesis gene expression in response to anaerobiosis. Also involved in positive regulation of the cbbI and cbbII Calvin cycle CO2 fixation operons, as well as in regulation of expression of genes involved in alternative CO2 fixation pathways. Phosphorylates RegA/PrrA. The sequence is that of Sensor histidine kinase RegB (regB) from Cereibacter sphaeroides (Rhodobacter sphaeroides).